Here is a 450-residue protein sequence, read N- to C-terminus: Putative mediator of RNA polymerase II transcription subunit 27 (450 aa).

Residues 15 to 118 (QQQQAQQHQQ…QKLKKSMDLV (104 aa)) adopt a coiled-coil conformation.

The protein belongs to the Mediator complex subunit 27 family. As to quaternary structure, component of the Mediator complex.

Its subcellular location is the nucleus. Component of the Mediator complex, a coactivator involved in the regulated transcription of nearly all RNA polymerase II-dependent genes. Mediator functions as a bridge to convey information from gene-specific regulatory proteins to the basal RNA polymerase II transcription machinery. Mediator is recruited to promoters by direct interactions with regulatory proteins and serves as a scaffold for the assembly of a functional preinitiation complex with RNA polymerase II and the general transcription factors. The chain is Putative mediator of RNA polymerase II transcription subunit 27 (med27) from Dictyostelium discoideum (Social amoeba).